The following is a 25-amino-acid chain: CKGKGASCRKTMYDCCRGSCRSGRC.

Disulfide bonds link Cys1–Cys16, Cys8–Cys20, and Cys15–Cys25. Cys25 carries the post-translational modification Cysteine amide.

This sequence belongs to the conotoxin O1 superfamily. In terms of tissue distribution, expressed by the venom duct.

Its subcellular location is the secreted. Omega-conotoxins act at presynaptic membranes, they bind and block voltage-gated calcium channels (Cav). This toxin blocks N-, P- and Q-type calcium channels. It shows high activities on Cav2.1/CACNA1A (IC(50)=11 nM) and Cav2.2/CACNA1B (IC(50)=7.7 nM). In addition, it shows a higher potency when Cav2.2/CACNA1B is only expressed with the ancillary subunit CACNB3 (IC(50)=1.6 nM) than on Cav2.2/CACNA1B expressed with the ancillary subunits CACNA2D1 and CACNB3 (IC(50)=12 nM). Both the Cav2.2/CACNA1B block by this toxin and the recovery are voltage-independent. It is noteworthy that ancillary subunits beta do not modulate recovery from this toxin block, since Cav2.2/CACNA1B expressed with either the ancillary subunit CACNB2a (isoform 2a) or with CACNB3 exhibits moderate recovery. The protein is Omega-conotoxin CVIB of Conus catus (Cat cone).